The chain runs to 191 residues: Outer membrane lipoprotein DolP (191 aa).

A signal peptide spans 1–18 (MKALSPIAVLISALLLQG). The N-palmitoyl cysteine moiety is linked to residue Cys-19. Cys-19 carries S-diacylglycerol cysteine lipidation. 2 consecutive BON domains span residues 46-115 (DDGT…RQGQ) and 124-191 (NDTW…TFIK).

This sequence belongs to the lipoprotein DolP family.

Its subcellular location is the cell outer membrane. Its function is as follows. Plays an important role in maintaining outer membrane integrity. This is Outer membrane lipoprotein DolP from Escherichia coli O157:H7.